Here is a 447-residue protein sequence, read N- to C-terminus: NAD-dependent histone deacetylase HST3 (447 aa).

The segment at 1 to 21 (MTSVSPSPPASRSGSMCSDLP) is disordered. A Deacetylase sirtuin-type domain is found at 35–363 (LDADDEVLRR…IKKLRQLKRE (329 aa)). Residues 60 to 79 (GAGI…DGLY) and 151 to 154 (QNID) contribute to the NAD(+) site. Histidine 187 functions as the Proton acceptor in the catalytic mechanism. Zn(2+) is bound by residues cysteine 195, cysteine 198, cysteine 220, and cysteine 223. Residues 282-284 (GTS), 312-314 (NKT), and cysteine 333 contribute to the NAD(+) site. The span at 365–375 (SDLRKQMKAQK) shows a compositional bias: basic and acidic residues. 2 disordered regions span residues 365-393 (SDLR…QGID) and 411-447 (KRKI…NQAS).

This sequence belongs to the sirtuin family. Class I subfamily. Zn(2+) serves as cofactor.

Its subcellular location is the cytoplasm. It is found in the nucleus. The catalysed reaction is N(6)-acetyl-L-lysyl-[protein] + NAD(+) + H2O = 2''-O-acetyl-ADP-D-ribose + nicotinamide + L-lysyl-[protein]. In terms of biological role, NAD-dependent histone deacetylase, which contributes together with HST4 to histone H3 'Lys-56' deacetylation, regulation of telomeric silencing, proper cell cycle progression, DNA damage control, DNA recombination, and genomic maintenance. This chain is NAD-dependent histone deacetylase HST3 (HST3), found in Saccharomyces cerevisiae (strain ATCC 204508 / S288c) (Baker's yeast).